We begin with the raw amino-acid sequence, 101 residues long: Chaperone modulatory protein CbpM (101 aa).

Belongs to the CbpM family.

In terms of biological role, interacts with CbpA and inhibits both the DnaJ-like co-chaperone activity and the DNA binding activity of CbpA. Together with CbpA, modulates the activity of the DnaK chaperone system. Does not inhibit the co-chaperone activity of DnaJ. This Pseudomonas putida (strain ATCC 47054 / DSM 6125 / CFBP 8728 / NCIMB 11950 / KT2440) protein is Chaperone modulatory protein CbpM.